A 382-amino-acid chain; its full sequence is Flap endonuclease 1 (382 aa).

An N-domain region spans residues 1-105; the sequence is MGIKGLNAII…HELTKRSSRR (105 aa). Position 34 (Asp-34) interacts with Mg(2+). Residues Arg-47 and Arg-71 each coordinate DNA. Mg(2+) is bound by residues Asp-87, Glu-156, Glu-158, Asp-177, and Asp-179. Positions 120–251 are I-domain; sequence EKMKQERRLV…VTALKLIKTH (132 aa). Glu-156 is a DNA binding site. Residues Gly-229 and Asp-231 each coordinate DNA. Residue Asp-231 participates in Mg(2+) binding. Residues 339–347 are interaction with PCNA; sequence IQGRLDGFF. The disordered stretch occupies residues 358-382; it reads AAAAKRAQENKKLNKNKNKVTKGRR. Residues 370 to 382 are compositionally biased toward basic residues; it reads LNKNKNKVTKGRR.

It belongs to the XPG/RAD2 endonuclease family. FEN1 subfamily. As to quaternary structure, interacts with PCNA. Three molecules of RAD27 bind to one PCNA trimer with each molecule binding to one PCNA monomer. PCNA stimulates the nuclease activity without altering cleavage specificity. Mg(2+) is required as a cofactor. In terms of processing, phosphorylated. Phosphorylation upon DNA damage induces relocalization to the nuclear plasma.

The protein resides in the nucleus. It is found in the nucleolus. The protein localises to the nucleoplasm. It localises to the mitochondrion. In terms of biological role, structure-specific nuclease with 5'-flap endonuclease and 5'-3' exonuclease activities involved in DNA replication and repair. During DNA replication, cleaves the 5'-overhanging flap structure that is generated by displacement synthesis when DNA polymerase encounters the 5'-end of a downstream Okazaki fragment. It enters the flap from the 5'-end and then tracks to cleave the flap base, leaving a nick for ligation. Also involved in the long patch base excision repair (LP-BER) pathway, by cleaving within the apurinic/apyrimidinic (AP) site-terminated flap. Acts as a genome stabilization factor that prevents flaps from equilibrating into structures that lead to duplications and deletions. Also possesses 5'-3' exonuclease activity on nicked or gapped double-stranded DNA, and exhibits RNase H activity. Also involved in replication and repair of rDNA and in repairing mitochondrial DNA. The polypeptide is Flap endonuclease 1 (Saccharomyces cerevisiae (strain YJM789) (Baker's yeast)).